Consider the following 365-residue polypeptide: Flagellar P-ring protein (365 aa).

Residues 1 to 20 (MKLPHFFVLAALVLSGAAHA) form the signal peptide.

Belongs to the FlgI family. As to quaternary structure, the basal body constitutes a major portion of the flagellar organelle and consists of four rings (L,P,S, and M) mounted on a central rod.

It localises to the periplasm. The protein localises to the bacterial flagellum basal body. Assembles around the rod to form the L-ring and probably protects the motor/basal body from shearing forces during rotation. The protein is Flagellar P-ring protein of Thiobacillus denitrificans (strain ATCC 25259 / T1).